Reading from the N-terminus, the 427-residue chain is Putative B3 domain-containing protein Os04g0346900 (427 aa).

2 consecutive DNA-binding regions (TF-B3) follow at residues 25 to 118 (LVPS…FDTT) and 140 to 236 (KPQF…FGPN). Residues 253–309 (TGEQQEAPSFSRRKCNNKKKSRFGEDDGNQQEMPCSRKGSGNKGRTSDRETKRMRKT) are disordered. Residues 263–273 (SRRKCNNKKKS) show a composition bias toward basic residues. The TF-B3 3 DNA-binding region spans 320–427 (WIKKEINEYV…TLWRVDIERC (108 aa)).

It is found in the nucleus. In Oryza sativa subsp. japonica (Rice), this protein is Putative B3 domain-containing protein Os04g0346900.